Reading from the N-terminus, the 482-residue chain is Proline--tRNA ligase (482 aa).

Belongs to the class-II aminoacyl-tRNA synthetase family. ProS type 3 subfamily. In terms of assembly, homodimer.

The protein resides in the cytoplasm. It catalyses the reaction tRNA(Pro) + L-proline + ATP = L-prolyl-tRNA(Pro) + AMP + diphosphate. Its function is as follows. Catalyzes the attachment of proline to tRNA(Pro) in a two-step reaction: proline is first activated by ATP to form Pro-AMP and then transferred to the acceptor end of tRNA(Pro). This chain is Proline--tRNA ligase, found in Natronomonas pharaonis (strain ATCC 35678 / DSM 2160 / CIP 103997 / JCM 8858 / NBRC 14720 / NCIMB 2260 / Gabara) (Halobacterium pharaonis).